Reading from the N-terminus, the 617-residue chain is V-type proton ATPase catalytic subunit A (617 aa).

Residue 257 to 264 (GAFGCGKT) coordinates ATP.

Belongs to the ATPase alpha/beta chains family. V-ATPase is a heteromultimeric enzyme composed of a peripheral catalytic V1 complex (components A to H) attached to an integral membrane V0 proton pore complex (components: a, c, c', c'', d, e, f and VOA1). Is a probable target for sumoylation.

The protein resides in the vacuole membrane. It catalyses the reaction ATP + H2O + 4 H(+)(in) = ADP + phosphate + 5 H(+)(out). In terms of biological role, catalytic subunit of the V1 complex of vacuolar(H+)-ATPase (V-ATPase), a multisubunit enzyme composed of a peripheral complex (V1) that hydrolyzes ATP and a membrane integral complex (V0) that translocates protons. V-ATPase is responsible for acidifying and maintaining the pH of intracellular compartments. Mediates oxidative stress response, filamentous growth, and plays an important role in virulence. The polypeptide is V-type proton ATPase catalytic subunit A (Candida albicans (strain SC5314 / ATCC MYA-2876) (Yeast)).